A 253-amino-acid polypeptide reads, in one-letter code: 5-oxoprolinase subunit A (253 aa).

Belongs to the LamB/PxpA family. As to quaternary structure, forms a complex composed of PxpA, PxpB and PxpC.

The catalysed reaction is 5-oxo-L-proline + ATP + 2 H2O = L-glutamate + ADP + phosphate + H(+). Functionally, catalyzes the cleavage of 5-oxoproline to form L-glutamate coupled to the hydrolysis of ATP to ADP and inorganic phosphate. This Bacillus anthracis (strain CDC 684 / NRRL 3495) protein is 5-oxoprolinase subunit A.